We begin with the raw amino-acid sequence, 400 residues long: Elongation factor Tu-B (400 aa).

Positions 10 to 209 constitute a tr-type G domain; it reads KPHVNVGTIG…VVDEYIPTPE (200 aa). The tract at residues 19–26 is G1; sequence GHVDHGKT. 19-26 provides a ligand contact to GTP; sequence GHVDHGKT. Residue Thr26 participates in Mg(2+) binding. The G2 stretch occupies residues 60-64; the sequence is GITIN. Residues 81–84 form a G3 region; that stretch reads DCPG. Residues 81–85 and 136–139 contribute to the GTP site; these read DCPGH and NKAD. Positions 136–139 are G4; sequence NKAD. The segment at 174-176 is G5; sequence SAL.

It belongs to the TRAFAC class translation factor GTPase superfamily. Classic translation factor GTPase family. EF-Tu/EF-1A subfamily. In terms of assembly, monomer.

Its subcellular location is the cytoplasm. It catalyses the reaction GTP + H2O = GDP + phosphate + H(+). Its function is as follows. GTP hydrolase that promotes the GTP-dependent binding of aminoacyl-tRNA to the A-site of ribosomes during protein biosynthesis. This Caldanaerobacter subterraneus subsp. tengcongensis (strain DSM 15242 / JCM 11007 / NBRC 100824 / MB4) (Thermoanaerobacter tengcongensis) protein is Elongation factor Tu-B.